The following is a 361-amino-acid chain: Peptide chain release factor 1 (361 aa).

N5-methylglutamine is present on Gln235. The interval 283–306 (RSQQATAEAMTRKLQVGSGDRSQR) is disordered.

This sequence belongs to the prokaryotic/mitochondrial release factor family. In terms of processing, methylated by PrmC. Methylation increases the termination efficiency of RF1.

It localises to the cytoplasm. In terms of biological role, peptide chain release factor 1 directs the termination of translation in response to the peptide chain termination codons UAG and UAA. This chain is Peptide chain release factor 1, found in Xylella fastidiosa (strain M23).